A 161-amino-acid polypeptide reads, in one-letter code: Regulator of ribonuclease activity A (161 aa).

The protein belongs to the RraA family. As to quaternary structure, homotrimer. Binds to both RNA-binding sites in the C-terminal region of Rne and to RhlB.

The protein localises to the cytoplasm. In terms of biological role, globally modulates RNA abundance by binding to RNase E (Rne) and regulating its endonucleolytic activity. Can modulate Rne action in a substrate-dependent manner by altering the composition of the degradosome. Modulates RNA-binding and helicase activities of the degradosome. The chain is Regulator of ribonuclease activity A from Citrobacter koseri (strain ATCC BAA-895 / CDC 4225-83 / SGSC4696).